A 252-amino-acid polypeptide reads, in one-letter code: Segregation and condensation protein A (252 aa).

Residues 117–136 (EREEERQNAFTKPPSDLSEF) are disordered.

Belongs to the ScpA family. In terms of assembly, component of a cohesin-like complex composed of ScpA, ScpB and the Smc homodimer, in which ScpA and ScpB bind to the head domain of Smc. The presence of the three proteins is required for the association of the complex with DNA.

It is found in the cytoplasm. Its function is as follows. Participates in chromosomal partition during cell division. May act via the formation of a condensin-like complex containing Smc and ScpB that pull DNA away from mid-cell into both cell halves. This chain is Segregation and condensation protein A, found in Bacillus pumilus (strain SAFR-032).